Reading from the N-terminus, the 147-residue chain is Large ribosomal subunit protein uL15 (147 aa).

Residues 1–13 show a composition bias toward basic and acidic residues; it reads MELHSLKAAEGSR. A disordered region spans residues 1-57; that stretch reads MELHSLKAAEGSRKVRNRVGRGTSSGNGKTSGRGQKGQKSRSGGGVRPGFEGGQTEL. Gly residues-rich tracts occupy residues 23 to 35 and 42 to 52; these read TSSGNGKTSGRGQ and SGGGVRPGFEG.

Belongs to the universal ribosomal protein uL15 family. In terms of assembly, part of the 50S ribosomal subunit.

Binds to the 23S rRNA. The chain is Large ribosomal subunit protein uL15 from Lactococcus lactis subsp. lactis (strain IL1403) (Streptococcus lactis).